Here is a 449-residue protein sequence, read N- to C-terminus: Putative glycosyltransferase 7 (449 aa).

Residues methionine 1 to aspartate 32 are Cytoplasmic-facing. Residues valine 33–phenylalanine 53 traverse the membrane as a helical; Signal-anchor for type II membrane protein segment. Residues serine 54–tryptophan 449 are Lumenal-facing. N-linked (GlcNAc...) asparagine glycosylation is found at asparagine 59, asparagine 123, and asparagine 332.

It belongs to the glycosyltransferase 34 family.

It is found in the golgi apparatus membrane. Its function is as follows. Probable glycosyltransferase that may be involved in the biosynthesis of xyloglucan. The chain is Putative glycosyltransferase 7 (GT7) from Arabidopsis thaliana (Mouse-ear cress).